A 374-amino-acid chain; its full sequence is Speckle-type POZ protein (374 aa).

Residues 31–161 (KFSYMWTINN…DDKLTLFCEV (131 aa)) enclose the MATH domain. A required for nuclear localization region spans residues 71-191 (VNPKGLDEES…PECRLADELG (121 aa)). Residues 123-133 (YRFVQGKDWGF) form an important for binding substrate proteins region. The 125-residue stretch at 173 to 297 (QNTMNMVKVP…MCEDALCSNL (125 aa)) folds into the BTB domain. Important for homodimerization stretches follow at residues 186-217 (LADE…HKAI) and 297-355 (LSVE…AYRS).

Belongs to the Tdpoz family. Interacts with GLI2 and GLI3. Homodimer and homooligomer. Heterodimer with SPOPL. Each dimer interacts with two CUL3 molecules. Part of cullin-RING-based BCR (BTB-CUL3-RBX1) E3 ubiquitin-protein ligase complexes that contain CUL3 and homodimeric SPOP, or the heterodimer formed by SPOP and SPOPL, plus a target protein, such as MACROH2A1, PDX1/IPF1, BMI1, BRMS1 and DAXX. Interacts with IRF1; this interaction mediates IRF1 proteasomal degradation. Interacts with HNF1A.

Its subcellular location is the nucleus. It localises to the nucleus speckle. Its pathway is protein modification; protein ubiquitination. In terms of biological role, component of a cullin-RING-based BCR (BTB-CUL3-RBX1) E3 ubiquitin-protein ligase complex that mediates the ubiquitination of target proteins, leading most often to their proteasomal degradation. In complex with CUL3, involved in ubiquitination and proteasomal degradation of BRMS1, DAXX, PDX1/IPF1, GLI2 and GLI3. In complex with CUL3, involved in ubiquitination of MACROH2A1 and BMI1; this does not lead to their proteasomal degradation. Inhibits transcriptional activation of PDX1/IPF1 targets, such as insulin, by promoting PDX1/IPF1 degradation. The cullin-RING-based BCR (BTB-CUL3-RBX1) E3 ubiquitin-protein ligase complex containing homodimeric SPOP has higher ubiquitin ligase activity than the complex that contains the heterodimer formed by SPOP and SPOPL. Involved in the regulation of bromodomain and extra-terminal motif (BET) proteins BRD2, BRD3, BRD4 stability.Plays an essential role for proper translation, but not for their degradation, of critical DNA replication licensing factors CDT1 and CDC6, thereby participating in DNA synthesis and cell proliferation. Regulates interferon regulatory factor 1/IRF1 proteasomal turnover by targeting S/T-rich degrons in IRF1. Involved in ubiquitination of BRDT and promotes its degradation, thereby regulates histone removal in early condensing spermatids prior to histone-to-protamine exchange. The chain is Speckle-type POZ protein (SPOP) from Bos taurus (Bovine).